Reading from the N-terminus, the 340-residue chain is Aurora kinase A- and ninein-interacting protein (340 aa).

Residues 175–340 (QREAKRKGEG…DSEGNRVIRH (166 aa)) are interaction with AURKA. The span at 178–190 (AKRKGEGLRESKT) shows a compositional bias: basic and acidic residues. Residues 178–209 (AKRKGEGLRESKTDCPGMGSHIRPPGSKCHQP) are disordered. The interval 266 to 340 (RDSWSQLFTE…DSEGNRVIRH (75 aa)) is interaction with RBBP8/CtIP. The residue at position 277 (serine 277) is a Phosphoserine. The tract at residues 293-317 (DVTNARNQGSGQFPDSPQAQGQDGP) is disordered. Positions 296–313 (NARNQGSGQFPDSPQAQG) are enriched in polar residues.

This sequence belongs to the AUNIP family. As to quaternary structure, interacts (via C-terminus) with AURKA (via C-terminus). Interacts (via N-terminus) with NIN; this interaction blocks NIN phosphorylation by both AURKA and GSK3B. Identified in a complex with NIN and AURKA. Interacts with RBBP8/CtIP.

Its subcellular location is the nucleus. The protein resides in the chromosome. The protein localises to the cytoplasm. It localises to the cytoskeleton. It is found in the microtubule organizing center. Its subcellular location is the centrosome. The protein resides in the spindle pole. Functionally, DNA-binding protein that accumulates at DNA double-strand breaks (DSBs) following DNA damage and promotes DNA resection and homologous recombination. Serves as a sensor of DNA damage: binds DNA with a strong preference for DNA substrates that mimic structures generated at stalled replication forks, and anchors RBBP8/CtIP to DSB sites to promote DNA end resection and ensuing homologous recombination repair. Inhibits non-homologous end joining (NHEJ). Required for the dynamic movement of AURKA at the centrosomes and spindle apparatus during the cell cycle. The sequence is that of Aurora kinase A- and ninein-interacting protein from Mus musculus (Mouse).